Here is a 141-residue protein sequence, read N- to C-terminus: Nucleoside triphosphatase NudI (141 aa).

The Nudix hydrolase domain occupies 1 to 141 (MRQRTIVCPL…RKTLSLKGLL (141 aa)). Positions 38–59 (GGVEPGERIEDALRREIREELG) match the Nudix box motif.

It belongs to the Nudix hydrolase family. NudI subfamily. In terms of assembly, monomer. Requires Mg(2+) as cofactor.

It carries out the reaction a ribonucleoside 5'-triphosphate + H2O = a ribonucleoside 5'-phosphate + diphosphate + H(+). The catalysed reaction is a 2'-deoxyribonucleoside 5'-triphosphate + H2O = a 2'-deoxyribonucleoside 5'-phosphate + diphosphate + H(+). It catalyses the reaction dUTP + H2O = dUMP + diphosphate + H(+). The enzyme catalyses dTTP + H2O = dTMP + diphosphate + H(+). It carries out the reaction dCTP + H2O = dCMP + diphosphate + H(+). Functionally, catalyzes the hydrolysis of nucleoside triphosphates, with a preference for pyrimidine deoxynucleoside triphosphates (dUTP, dTTP and dCTP). This Escherichia fergusonii (strain ATCC 35469 / DSM 13698 / CCUG 18766 / IAM 14443 / JCM 21226 / LMG 7866 / NBRC 102419 / NCTC 12128 / CDC 0568-73) protein is Nucleoside triphosphatase NudI.